The following is a 391-amino-acid chain: Bifunctional enzyme IspD/IspF (391 aa).

The tract at residues 1 to 230 (MLAAGRGKRA…KKKMQMFPDI (230 aa)) is 2-C-methyl-D-erythritol 4-phosphate cytidylyltransferase. The segment at 231–391 (RTGNGYDVHS…TVLYPGEIPK (161 aa)) is 2-C-methyl-D-erythritol 2,4-cyclodiphosphate synthase. A divalent metal cation contacts are provided by aspartate 237 and histidine 239. 4-CDP-2-C-methyl-D-erythritol 2-phosphate-binding positions include 237–239 (DVH) and 263–264 (HS). Histidine 271 contributes to the a divalent metal cation binding site. 4-CDP-2-C-methyl-D-erythritol 2-phosphate-binding positions include 285 to 287 (DIG), 361 to 364 (TTNE), phenylalanine 368, and arginine 371.

This sequence in the N-terminal section; belongs to the IspD/TarI cytidylyltransferase family. IspD subfamily. It in the C-terminal section; belongs to the IspF family. Requires a divalent metal cation as cofactor.

It catalyses the reaction 2-C-methyl-D-erythritol 4-phosphate + CTP + H(+) = 4-CDP-2-C-methyl-D-erythritol + diphosphate. The catalysed reaction is 4-CDP-2-C-methyl-D-erythritol 2-phosphate = 2-C-methyl-D-erythritol 2,4-cyclic diphosphate + CMP. It participates in isoprenoid biosynthesis; isopentenyl diphosphate biosynthesis via DXP pathway; isopentenyl diphosphate from 1-deoxy-D-xylulose 5-phosphate: step 2/6. Its pathway is isoprenoid biosynthesis; isopentenyl diphosphate biosynthesis via DXP pathway; isopentenyl diphosphate from 1-deoxy-D-xylulose 5-phosphate: step 4/6. Bifunctional enzyme that catalyzes the formation of 4-diphosphocytidyl-2-C-methyl-D-erythritol from CTP and 2-C-methyl-D-erythritol 4-phosphate (MEP) (IspD), and catalyzes the conversion of 4-diphosphocytidyl-2-C-methyl-D-erythritol 2-phosphate (CDP-ME2P) to 2-C-methyl-D-erythritol 2,4-cyclodiphosphate (ME-CPP) with a corresponding release of cytidine 5-monophosphate (CMP) (IspF). The protein is Bifunctional enzyme IspD/IspF of Bartonella quintana (strain Toulouse) (Rochalimaea quintana).